A 310-amino-acid chain; its full sequence is Acetylglutamate kinase (310 aa).

Substrate contacts are provided by residues 76 to 77 (GG), R98, and N203.

This sequence belongs to the acetylglutamate kinase family. ArgB subfamily.

Its subcellular location is the cytoplasm. It carries out the reaction N-acetyl-L-glutamate + ATP = N-acetyl-L-glutamyl 5-phosphate + ADP. Its pathway is amino-acid biosynthesis; L-arginine biosynthesis; N(2)-acetyl-L-ornithine from L-glutamate: step 2/4. Its function is as follows. Catalyzes the ATP-dependent phosphorylation of N-acetyl-L-glutamate. The chain is Acetylglutamate kinase from Cutibacterium acnes (strain DSM 16379 / KPA171202) (Propionibacterium acnes).